A 267-amino-acid chain; its full sequence is MRILVEIAYQGNNFLGFQIQQNGRTVQQQFEKLLQRMHKRHVRIHPSSRTDRGVHAIQQYFHFDTELNIPMSQWQYAMNRTLPDDIYVNNVVTVDDDFHCRYDCVGKRYRYKVYQAQHRDPFQSGLKTFIPETLDLGKMNRAAQQFIGTHDFTGFCSQKTEVESKVRTLYQSEIVKTDDGFDYIVTGSGFLYNMVRVLVAFLIEVGKGRHEVSDVPKLLESKNRKNVPFTAPAEGLYLEKIYLDENELLKDFGNDIKIHRKKSLQND.

The Nucleophile role is filled by D51. A substrate-binding site is contributed by Y109.

Belongs to the tRNA pseudouridine synthase TruA family. In terms of assembly, homodimer.

It catalyses the reaction uridine(38/39/40) in tRNA = pseudouridine(38/39/40) in tRNA. Functionally, formation of pseudouridine at positions 38, 39 and 40 in the anticodon stem and loop of transfer RNAs. The sequence is that of tRNA pseudouridine synthase A from Staphylococcus aureus (strain USA300).